We begin with the raw amino-acid sequence, 790 residues long: GATOR2 complex protein WDR24 (790 aa).

WD repeat units lie at residues 72–112 (SLNL…RNKQ), 118–158 (EHKR…SVST), 161–201 (GQSE…RCER), 205–245 (AHNG…AKEM), 249–291 (QTIA…VPAA), and 295–338 (EHRD…VERA). S155 is subject to Phosphoserine; by AMPK. S470 and S496 each carry phosphoserine. T581 is subject to Phosphothreonine. Phosphoserine is present on residues S594 and S598. The C4-type zinc-finger motif lies at 718 to 740 (NCSHCKRPMSSRGWVCDRCHRCA). C719, C722, C733, C736, C743, C746, C757, C760, H762, H765, H768, C779, C783, H785, and C787 together coordinate Zn(2+). The segment at 741–790 (SMCAVCHHVVKGLFVWCQGCSHGGHLQHIMKWLEGSSHCPAGCGHLCEYS) adopts an RING-type; atypical zinc-finger fold.

The protein belongs to the WD repeat WDR24 family. Component of the GATOR2 subcomplex, composed of MIOS, SEC13, SEH1L, WDR24 and WDR59. The GATOR2 complex interacts with CASTOR1 and CASTOR2; the interaction is negatively regulated by arginine. The GATOR2 complex interacts with SESN1, SESN2 and SESN3; the interaction is negatively regulated by amino acids. SESN1, SESN2 and SESN3 convey leucine availability via direct interaction with SEH1L and WDR24. In terms of processing, phosphorylation at Ser-155 by AMPK in response to glucose deprivation inactivates WDR24 by promoting interaction with 14-3-3 proteins, such as YWHAG, preventing assembly of the GATOR2 complex. Autoubiquitinated; MIOS is required to prevent autoubiquitination.

The protein localises to the lysosome membrane. The catalysed reaction is S-ubiquitinyl-[E2 ubiquitin-conjugating enzyme]-L-cysteine + [acceptor protein]-L-lysine = [E2 ubiquitin-conjugating enzyme]-L-cysteine + N(6)-ubiquitinyl-[acceptor protein]-L-lysine.. Its pathway is protein modification; protein ubiquitination. Its activity is regulated as follows. The GATOR2 complex is negatively regulated by the upstream amino acid sensors CASTOR1 and SESN2, which sequester the GATOR2 complex in absence of amino acids. In the presence of abundant amino acids, GATOR2 is released from CASTOR1 and SESN2 and activated. In terms of biological role, catalytic component of the GATOR2 complex, a multiprotein complex that acts as an activator of the amino acid-sensing branch of the mTORC1 signaling pathway. The GATOR2 complex indirectly activates mTORC1 through the inhibition of the GATOR1 subcomplex. GATOR2 probably acts as an E3 ubiquitin-protein ligase toward GATOR1. In the presence of abundant amino acids, the GATOR2 complex mediates ubiquitination of the NPRL2 core component of the GATOR1 complex, leading to GATOR1 inactivation. In the absence of amino acids, GATOR2 is inhibited, activating the GATOR1 complex. In addition to its role in regulation of the mTORC1 complex, promotes the acidification of lysosomes and facilitates autophagic flux. Within the GATOR2 complex, WDR24 constitutes the catalytic subunit that mediates 'Lys-6'-linked ubiquitination of NPRL2. This Homo sapiens (Human) protein is GATOR2 complex protein WDR24.